We begin with the raw amino-acid sequence, 257 residues long: Dihydroorotate dehydrogenase B (NAD(+)), electron transfer subunit (257 aa).

The FAD-binding FR-type domain occupies 2–102; the sequence is IGRERMTVAS…LGPLGNGFPL (101 aa). Residues 53–56, 70–72, and 77–78 each bind FAD; these read RPLS, IYR, and GT. Residues cysteine 221, cysteine 226, cysteine 229, and cysteine 244 each coordinate [2Fe-2S] cluster.

The protein belongs to the PyrK family. As to quaternary structure, heterotetramer of 2 PyrK and 2 PyrD type B subunits. The cofactor is [2Fe-2S] cluster. It depends on FAD as a cofactor.

It participates in pyrimidine metabolism; UMP biosynthesis via de novo pathway; orotate from (S)-dihydroorotate (NAD(+) route): step 1/1. In terms of biological role, responsible for channeling the electrons from the oxidation of dihydroorotate from the FMN redox center in the PyrD type B subunit to the ultimate electron acceptor NAD(+). This is Dihydroorotate dehydrogenase B (NAD(+)), electron transfer subunit from Geobacillus kaustophilus (strain HTA426).